Reading from the N-terminus, the 39-residue chain is SPbeta prophage-derived membrane protein YosA (39 aa).

The helical transmembrane segment at 19 to 39 (SFVLIVVLFILLIIVGATFLY) threads the bilayer.

The protein belongs to the SscA family.

Its subcellular location is the membrane. The chain is SPbeta prophage-derived membrane protein YosA (yosA) from Bacillus subtilis (strain 168).